The sequence spans 178 residues: Peptide deformylase (178 aa).

Residues Cys-92 and His-134 each coordinate Fe cation. Glu-135 is a catalytic residue. A Fe cation-binding site is contributed by His-138.

Belongs to the polypeptide deformylase family. Fe(2+) serves as cofactor.

It carries out the reaction N-terminal N-formyl-L-methionyl-[peptide] + H2O = N-terminal L-methionyl-[peptide] + formate. In terms of biological role, removes the formyl group from the N-terminal Met of newly synthesized proteins. Requires at least a dipeptide for an efficient rate of reaction. N-terminal L-methionine is a prerequisite for activity but the enzyme has broad specificity at other positions. The sequence is that of Peptide deformylase from Alkalilimnicola ehrlichii (strain ATCC BAA-1101 / DSM 17681 / MLHE-1).